The sequence spans 421 residues: Histidine--tRNA ligase (421 aa).

This sequence belongs to the class-II aminoacyl-tRNA synthetase family. As to quaternary structure, homodimer.

The protein resides in the cytoplasm. It catalyses the reaction tRNA(His) + L-histidine + ATP = L-histidyl-tRNA(His) + AMP + diphosphate + H(+). The polypeptide is Histidine--tRNA ligase (Francisella tularensis subsp. holarctica (strain FTNF002-00 / FTA)).